Reading from the N-terminus, the 386-residue chain is Large ribosomal subunit protein uL4 (386 aa).

Basic and acidic residues predominate over residues 341 to 357 (VEQRRLKEKQAKLDQKR). Residues 341-386 (VEQRRLKEKQAKLDQKRGIATPVEGAGKGRPRKTTAKPTKAKAGKK) form a disordered region. Residues 369–386 (GRPRKTTAKPTKAKAGKK) show a composition bias toward basic residues.

The protein belongs to the universal ribosomal protein uL4 family.

The sequence is that of Large ribosomal subunit protein uL4 (RPL4) from Urechis caupo (Innkeeper worm).